The following is a 188-amino-acid chain: UPF0398 protein ABC2016 (188 aa).

The protein belongs to the UPF0398 family.

The polypeptide is UPF0398 protein ABC2016 (Shouchella clausii (strain KSM-K16) (Alkalihalobacillus clausii)).